A 1325-amino-acid polypeptide reads, in one-letter code: Zinc finger MYM-type protein 6 (1325 aa).

MYM-type zinc fingers lie at residues 113 to 151 (QLFC…PKDV), 163 to 206 (KDFC…RFEV), 213 to 248 (HGLC…SSGP), 296 to 334 (ELFC…QYHL), 342 to 443 (YSFC…KPEL), 451 to 485 (FLFC…KETV), 492 to 531 (KPFC…LVEN), and 538 to 572 (EEFC…SESI). Phosphoserine is present on serine 397. The interval 665–733 (ESTQEDAMKF…NDAELDSPPS (69 aa)) is disordered. The segment covering 695 to 706 (PVTQTKATSCKP) has biased composition (polar residues).

As to expression, expressed at high levels in heart, skeletal muscle, kidney and liver.

It localises to the nucleus. Plays a role in the regulation of cell morphology and cytoskeletal organization. The protein is Zinc finger MYM-type protein 6 (ZMYM6) of Homo sapiens (Human).